Reading from the N-terminus, the 1517-residue chain is Neurite extension and migration factor (1517 aa).

Over residues 381–405 (DKKKGKEEVHEDKSIEKKDEKDNGE) the composition is skewed to basic and acidic residues. 7 disordered regions span residues 381–416 (DKKK…PCSG), 505–529 (VNER…PKKR), 644–697 (SMEA…GLIG), 732–775 (KKIK…HMSE), 1065–1084 (RHSS…SPQS), 1161–1228 (DEPA…KKGK), and 1372–1422 (AGTP…SSED). The span at 644 to 663 (SMEASASSKQVSFGSDQKQA) shows a compositional bias: polar residues. Over residues 678–687 (SALLAAPSSA) the composition is skewed to low complexity. The span at 764–773 (TPGTSNSSHM) shows a compositional bias: polar residues.

The protein resides in the nucleus. The protein localises to the cytoplasm. Functionally, involved in neurite outgrowth by regulating cell-cell adhesion via the N-cadherin signaling pathway. May act by regulating expression of protein-coding genes, such as N-cadherins and integrin beta-1 (ITGB1). This is Neurite extension and migration factor from Rattus norvegicus (Rat).